Reading from the N-terminus, the 725-residue chain is Catalase B (725 aa).

An N-terminal signal peptide occupies residues 1-15 (MRALSLASLIGIASA). A propeptide spanning residues 16 to 27 (ACPYMTGELERR) is cleaved from the precursor. Asn-50 carries N-linked (GlcNAc...) asparagine glycosylation. The active site involves His-101. A glycan (N-linked (GlcNAc...) asparagine) is linked at Asn-119. Asn-174 is a catalytic residue. Residue Tyr-388 coordinates heme. Residues Asn-447, Asn-550, and Asn-645 are each glycosylated (N-linked (GlcNAc...) asparagine).

The protein belongs to the catalase family. Homotetramer. Requires heme as cofactor.

Its subcellular location is the secreted. It catalyses the reaction 2 H2O2 = O2 + 2 H2O. Functionally, occurs in almost all aerobically respiring organisms and serves to protect cells from the toxic effects of hydrogen peroxide through its degradation into water and oxygen. This is Catalase B (catB) from Aspergillus oryzae (strain ATCC 42149 / RIB 40) (Yellow koji mold).